We begin with the raw amino-acid sequence, 180 residues long: Cell division protein SepF (180 aa).

The disordered stretch occupies residues 1–66 (MAFSFKSFFG…NRNGFAYDNG (66 aa)). Over residues 12–23 (ADDEEEEYEDSG) the composition is skewed to acidic residues. The span at 24-57 (YEQQPNQGQQQPVNSQQQNTSNQSYSGYNNQNQN) shows a compositional bias: low complexity.

This sequence belongs to the SepF family. As to quaternary structure, homodimer. Interacts with FtsZ.

The protein resides in the cytoplasm. Cell division protein that is part of the divisome complex and is recruited early to the Z-ring. Probably stimulates Z-ring formation, perhaps through the cross-linking of FtsZ protofilaments. Its function overlaps with FtsA. The sequence is that of Cell division protein SepF from Oenococcus oeni (strain ATCC BAA-331 / PSU-1).